Consider the following 146-residue polypeptide: uncharacterized protein (146 aa).

The 140-residue stretch at 7–146 (LEINYKTDEL…EGHDVLLWKP (140 aa)) folds into the N-acetyltransferase domain.

This is an uncharacterized protein from Staphylococcus aureus (strain COL).